The following is a 413-amino-acid chain: Arginine biosynthesis bifunctional protein ArgJ (413 aa).

Residues T158, K184, T195, E285, N408, and S413 each contribute to the substrate site. The active-site Nucleophile is T195.

The protein belongs to the ArgJ family. As to quaternary structure, heterotetramer of two alpha and two beta chains.

It is found in the cytoplasm. The enzyme catalyses N(2)-acetyl-L-ornithine + L-glutamate = N-acetyl-L-glutamate + L-ornithine. It carries out the reaction L-glutamate + acetyl-CoA = N-acetyl-L-glutamate + CoA + H(+). Its pathway is amino-acid biosynthesis; L-arginine biosynthesis; L-ornithine and N-acetyl-L-glutamate from L-glutamate and N(2)-acetyl-L-ornithine (cyclic): step 1/1. It functions in the pathway amino-acid biosynthesis; L-arginine biosynthesis; N(2)-acetyl-L-ornithine from L-glutamate: step 1/4. In terms of biological role, catalyzes two activities which are involved in the cyclic version of arginine biosynthesis: the synthesis of N-acetylglutamate from glutamate and acetyl-CoA as the acetyl donor, and of ornithine by transacetylation between N(2)-acetylornithine and glutamate. The chain is Arginine biosynthesis bifunctional protein ArgJ from Bradyrhizobium diazoefficiens (strain JCM 10833 / BCRC 13528 / IAM 13628 / NBRC 14792 / USDA 110).